Reading from the N-terminus, the 457-residue chain is RuvB-like helicase 1 (457 aa).

73 to 80 (GGPSTGKT) serves as a coordination point for ATP.

Belongs to the RuvB family. As to quaternary structure, may form heterododecamers with RVB2. Component of the SWR1 chromatin remodeling complex, the INO80 chromatin remodeling complex, and of the R2TP complex.

Its subcellular location is the nucleus. The enzyme catalyses ATP + H2O = ADP + phosphate + H(+). Its function is as follows. DNA helicase which participates in several chromatin remodeling complexes, including the SWR1 and the INO80 complexes. The SWR1 complex mediates the ATP-dependent exchange of histone H2A for the H2A variant HZT1 leading to transcriptional regulation of selected genes by chromatin remodeling. The INO80 complex remodels chromatin by shifting nucleosomes and is involved in DNA repair. Also involved in pre-rRNA processing. This chain is RuvB-like helicase 1 (RVB1), found in Candida glabrata (strain ATCC 2001 / BCRC 20586 / JCM 3761 / NBRC 0622 / NRRL Y-65 / CBS 138) (Yeast).